The primary structure comprises 355 residues: UDP-N-acetylglucosamine--N-acetylmuramyl-(pentapeptide) pyrophosphoryl-undecaprenol N-acetylglucosamine transferase (355 aa).

UDP-N-acetyl-alpha-D-glucosamine-binding positions include 14–16, Asn126, Arg162, Ser190, Ile243, 262–267, and Gln287; these read TGG and ALTVSE.

This sequence belongs to the glycosyltransferase 28 family. MurG subfamily.

It is found in the cell inner membrane. The enzyme catalyses di-trans,octa-cis-undecaprenyl diphospho-N-acetyl-alpha-D-muramoyl-L-alanyl-D-glutamyl-meso-2,6-diaminopimeloyl-D-alanyl-D-alanine + UDP-N-acetyl-alpha-D-glucosamine = di-trans,octa-cis-undecaprenyl diphospho-[N-acetyl-alpha-D-glucosaminyl-(1-&gt;4)]-N-acetyl-alpha-D-muramoyl-L-alanyl-D-glutamyl-meso-2,6-diaminopimeloyl-D-alanyl-D-alanine + UDP + H(+). Its pathway is cell wall biogenesis; peptidoglycan biosynthesis. In terms of biological role, cell wall formation. Catalyzes the transfer of a GlcNAc subunit on undecaprenyl-pyrophosphoryl-MurNAc-pentapeptide (lipid intermediate I) to form undecaprenyl-pyrophosphoryl-MurNAc-(pentapeptide)GlcNAc (lipid intermediate II). This Vibrio campbellii (strain ATCC BAA-1116) protein is UDP-N-acetylglucosamine--N-acetylmuramyl-(pentapeptide) pyrophosphoryl-undecaprenol N-acetylglucosamine transferase.